A 487-amino-acid chain; its full sequence is Signal recognition particle subunit SRP54 (487 aa).

The tract at residues 1–295 is G-domain; the sequence is MVLSQLGSSL…DAESFVRKLL (295 aa). Residues 108 to 115, 190 to 194, and 248 to 251 each bind GTP; these read GLQGAGKT, DTSGR, and TKLD. Residues 296 to 487 are M-domain; it reads GMGDLKGIAK…LGGTGKKGKK (192 aa).

This sequence belongs to the GTP-binding SRP family. SRP54 subfamily. As to quaternary structure, component of a signal recognition particle (SRP) complex that consists of a 7SL RNA molecule of 300 nucleotides and six protein subunits: SRP72, SRP68, SRP54, SRP19, SRP14 and SRP9.

It is found in the cytoplasm. Its subcellular location is the endoplasmic reticulum. It catalyses the reaction GTP + H2O = GDP + phosphate + H(+). Component of the signal recognition particle (SRP) complex, a ribonucleoprotein complex that mediates the cotranslational targeting of secretory and membrane proteins to the endoplasmic reticulum (ER). As part of the SRP complex, associates with the SRP receptor (SR) component SRPRA to target secretory proteins to the endoplasmic reticulum membrane. Binds to the signal sequence of presecretory proteins when they emerge from the ribosomes. Displays basal GTPase activity, and stimulates reciprocal GTPase activation of the SR subunit SRPRA. Forms a guanosine 5'-triphosphate (GTP)-dependent complex with the SR subunit SRPRA. SR compaction and GTPase mediated rearrangement of SR drive SRP-mediated cotranslational protein translocation into the ER. Requires the presence of SRP9/SRP14 and/or SRP19 to stably interact with RNA. The polypeptide is Signal recognition particle subunit SRP54 (Entamoeba histolytica (strain ATCC 30459 / HM-1:IMSS / ABRM)).